Consider the following 229-residue polypeptide: Molybdenum transport system permease protein ModB (229 aa).

The ABC transmembrane type-1 domain occupies 6–214 (INLSLSVAVS…LISLLLSEWL (209 aa)). The next 5 membrane-spanning stretches (helical) occupy residues 12-32 (VAVSSMLWSLPLAIFVAWLLA), 45-65 (VIHLPLVLPPVVIGYLLLVAM), 83-103 (FGFSWKGAVLSSAVVAFPLVV), 132-152 (FFTITLPLSLPGVLAGLVLGF), and 196-216 (LCLFAIILSLISLLLSEWLSK).

The protein belongs to the binding-protein-dependent transport system permease family. CysTW subfamily.

It is found in the cell inner membrane. Part of the binding-protein-dependent transport system for molybdenum; probably responsible for the translocation of the substrate across the membrane. The sequence is that of Molybdenum transport system permease protein ModB (modB) from Haemophilus influenzae (strain ATCC 51907 / DSM 11121 / KW20 / Rd).